The following is a 102-amino-acid chain: Cytochrome b (102 aa).

A run of 3 helical transmembrane segments spans residues 1 to 21 (FGSL…FLAM), 45 to 66 (WLIR…YLHI), and 81 to 101 (WNIG…GYVL). Residues His-51 and His-65 each contribute to the heme b site.

It belongs to the cytochrome b family. The cytochrome bc1 complex contains 3 respiratory subunits (MT-CYB, CYC1 and UQCRFS1), 2 core proteins (UQCRC1 and UQCRC2) and probably 6 low-molecular weight proteins. Requires heme b as cofactor.

It localises to the mitochondrion inner membrane. Functionally, component of the ubiquinol-cytochrome c reductase complex (complex III or cytochrome b-c1 complex) that is part of the mitochondrial respiratory chain. The b-c1 complex mediates electron transfer from ubiquinol to cytochrome c. Contributes to the generation of a proton gradient across the mitochondrial membrane that is then used for ATP synthesis. In Megalops atlanticus (Tarpon), this protein is Cytochrome b (mt-cyb).